The primary structure comprises 89 residues: MAHKKAGGSSRNGRDSQSKRLGVKKFGGEAVIAGNIIVRQRGTEWHPGSNVGLGKDHTIFALTAGNVNYRTKANGRVYVSVMPKAEAAE.

Residues 1-21 form a disordered region; it reads MAHKKAGGSSRNGRDSQSKRL.

This sequence belongs to the bacterial ribosomal protein bL27 family.

The chain is Large ribosomal subunit protein bL27 from Rhizobium leguminosarum bv. trifolii (strain WSM2304).